Consider the following 238-residue polypeptide: Large ribosomal subunit protein uL2 (238 aa).

The disordered stretch occupies residues 199–238; the sequence is PHGGGLHQSVSRSSTVARNTPPGRKVGHIAARRTGRRDRK. The span at 206–216 shows a compositional bias: polar residues; the sequence is QSVSRSSTVAR. Positions 223 to 238 are enriched in basic residues; sequence KVGHIAARRTGRRDRK.

Belongs to the universal ribosomal protein uL2 family. In terms of assembly, part of the 50S ribosomal subunit. Forms a bridge to the 30S subunit in the 70S ribosome.

One of the primary rRNA binding proteins. Required for association of the 30S and 50S subunits to form the 70S ribosome, for tRNA binding and peptide bond formation. It has been suggested to have peptidyltransferase activity; this is somewhat controversial. Makes several contacts with the 16S rRNA in the 70S ribosome. In Metallosphaera sedula (strain ATCC 51363 / DSM 5348 / JCM 9185 / NBRC 15509 / TH2), this protein is Large ribosomal subunit protein uL2.